Reading from the N-terminus, the 163-residue chain is Nucleotide-binding protein GK0742 (163 aa).

This sequence belongs to the YajQ family.

Its function is as follows. Nucleotide-binding protein. This chain is Nucleotide-binding protein GK0742, found in Geobacillus kaustophilus (strain HTA426).